Consider the following 469-residue polypeptide: Interstitial collagenase (469 aa).

The N-terminal stretch at 1–19 is a signal peptide; sequence MHSFPPLLLLLFWGVVSHS. Positions 20-99 are cleaved as a propeptide — activation peptide; sequence FPATLETQEQ…PRCGVPDVAQ (80 aa). Ser-57 carries the post-translational modification Phosphoserine. A Cysteine switch motif is present at residues 90-97; sequence PRCGVPDV. Cys-92 is a Zn(2+) binding site. The tract at residues 98–276 is metalloprotease; that stretch reads AQFVLTEGNP…VQPIGPQTPK (179 aa). The N-linked (GlcNAc...) asparagine glycan is linked to Asn-120. The Ca(2+) site is built by Asp-124 and Asp-158. 2 residues coordinate Zn(2+): His-168 and Asp-170. Asp-175, Gly-176, Gly-178, and Asn-180 together coordinate Ca(2+). His-183 provides a ligand contact to Zn(2+). Ca(2+) contacts are provided by Gly-190, Gly-192, and Asp-194. His-196 contributes to the Zn(2+) binding site. Ca(2+) contacts are provided by Asp-198, Glu-199, and Glu-201. His-218 serves as a coordination point for Zn(2+). Residue Glu-219 is part of the active site. The Zn(2+) site is built by His-222 and His-228. Thr-274 carries the phosphothreonine modification. 4 Hemopexin repeats span residues 275–324, 325–371, 374–422, and 423–466; these read PKAC…WPQL, PNGL…FGFP, VKHI…FPGI, and GHKV…WFNC. The cysteines at positions 278 and 466 are disulfide-linked. Residues Asp-285 and Glu-329 each contribute to the Ca(2+) site. At Tyr-360 the chain carries Phosphotyrosine; by PKDCC. Residues Asp-378 and Asp-427 each contribute to the Ca(2+) site.

It belongs to the peptidase M10A family. In terms of assembly, (Microbial infection) Interacts with HIV-1 Tat. It depends on Ca(2+) as a cofactor. Zn(2+) is required as a cofactor. Post-translationally, undergoes autolytic cleavage to two major forms (22 kDa and 27 kDa). A minor form (25 kDa) is the glycosylated form of the 22 kDa form. The 27 kDa form has no activity while the 22/25 kDa form can act as activator for collagenase. In terms of processing, tyrosine phosphorylated in platelets by PKDCC/VLK.

The protein resides in the secreted. It is found in the extracellular space. Its subcellular location is the extracellular matrix. It catalyses the reaction Cleavage of the triple helix of collagen at about three-quarters of the length of the molecule from the N-terminus, at 775-Gly-|-Ile-776 in the alpha1(I) chain. Cleaves synthetic substrates and alpha-macroglobulins at bonds where P1' is a hydrophobic residue.. Its activity is regulated as follows. Can be activated without removal of the activation peptide. In terms of biological role, cleaves collagens of types I, II, and III at one site in the helical domain. Also cleaves collagens of types VII and X. In case of HIV infection, interacts and cleaves the secreted viral Tat protein, leading to a decrease in neuronal Tat's mediated neurotoxicity. This Homo sapiens (Human) protein is Interstitial collagenase (MMP1).